The primary structure comprises 364 residues: Chorismate synthase (364 aa).

Arg-47 contacts NADP(+). FMN-binding positions include 125–127 (RAS), Gly-288, 303–307 (KPTAT), and Arg-329.

Belongs to the chorismate synthase family. In terms of assembly, homotetramer. It depends on FMNH2 as a cofactor.

The enzyme catalyses 5-O-(1-carboxyvinyl)-3-phosphoshikimate = chorismate + phosphate. The protein operates within metabolic intermediate biosynthesis; chorismate biosynthesis; chorismate from D-erythrose 4-phosphate and phosphoenolpyruvate: step 7/7. Its function is as follows. Catalyzes the anti-1,4-elimination of the C-3 phosphate and the C-6 proR hydrogen from 5-enolpyruvylshikimate-3-phosphate (EPSP) to yield chorismate, which is the branch point compound that serves as the starting substrate for the three terminal pathways of aromatic amino acid biosynthesis. This reaction introduces a second double bond into the aromatic ring system. This is Chorismate synthase from Synechococcus sp. (strain CC9605).